A 326-amino-acid polypeptide reads, in one-letter code: Sulfate/thiosulfate import ATP-binding protein CysA (326 aa).

Positions 3-237 (IEVRNVSKNF…PSNDFVYHFL (235 aa)) constitute an ABC transporter domain. ATP is bound at residue 35 to 42 (GPSGCGKT).

The protein belongs to the ABC transporter superfamily. Sulfate/tungstate importer (TC 3.A.1.6) family. As to quaternary structure, the complex is composed of two ATP-binding proteins (CysA), two transmembrane proteins (CysT and CysW) and a solute-binding protein (CysP).

It localises to the cell inner membrane. The catalysed reaction is sulfate(out) + ATP + H2O = sulfate(in) + ADP + phosphate + H(+). It carries out the reaction thiosulfate(out) + ATP + H2O = thiosulfate(in) + ADP + phosphate + H(+). Functionally, part of the ABC transporter complex CysAWTP involved in sulfate/thiosulfate import. Responsible for energy coupling to the transport system. The polypeptide is Sulfate/thiosulfate import ATP-binding protein CysA (Pseudomonas syringae pv. tomato (strain ATCC BAA-871 / DC3000)).